The following is a 68-amino-acid chain: Defensin gallicin (68 aa).

The signal sequence occupies residues 1–16 (MWIESDAGVAIDRHAR).

Post-translationally, contains 5 disulfide bonds. Expressed in hemolymph, gills, digestive gland, foot, adductor muscles and mantle.

It localises to the secreted. Its subcellular location is the target cell membrane. Shows antibacterial activity against numerous Gram-positive bacteria. It selectively inhibits peptidoglycan biosynthesis through complex formation with the cell wall precursor lipid II (1:1 molar ratio) thus inhibiting cell wall synthesis. This is Defensin gallicin from Mytilus galloprovincialis (Mediterranean mussel).